The sequence spans 77 residues: Conotoxin VnMKLT1-012 (77 aa).

A signal peptide spans 1–22 (MKLTCMMIVAVLFLTAWTFVTA). The propeptide occupies 23–48 (DDSRNGLDYLFPKARHEMNPKASRDI). 3 disulfides stabilise this stretch: C51-C68, C58-C72, and C67-C76.

The protein belongs to the conotoxin O1 superfamily. As to expression, expressed by the venom duct.

It localises to the secreted. The polypeptide is Conotoxin VnMKLT1-012 (Conus ventricosus (Mediterranean cone)).